The chain runs to 228 residues: Cytidylate kinase (228 aa).

G17–T25 lines the ATP pocket.

It belongs to the cytidylate kinase family. Type 1 subfamily.

The protein resides in the cytoplasm. The enzyme catalyses CMP + ATP = CDP + ADP. It carries out the reaction dCMP + ATP = dCDP + ADP. The chain is Cytidylate kinase from Burkholderia ambifaria (strain ATCC BAA-244 / DSM 16087 / CCUG 44356 / LMG 19182 / AMMD) (Burkholderia cepacia (strain AMMD)).